The following is a 269-amino-acid chain: Cytochrome c oxidase subunit 3 (269 aa).

A run of 7 helical transmembrane segments spans residues 7-29, 51-71, 90-110, 127-147, 167-187, 205-225, and 247-267; these read GYLQLHPFHLVGPSPWPIFTSFS, IILSIITVLYSMTLWFKDIIA, GFLLFVVSEILIFASLFWAYL, VGIDVISPAELPLLNTIILLA, TLYGFIYSTLLIALFVMFQFL, FYSLTGLHGLHMIMLTIMLVI, and ILYLHVLDVIWLFIYIIVYWW.

It belongs to the cytochrome c oxidase subunit 3 family. As to quaternary structure, component of the cytochrome c oxidase (complex IV, CIV), a multisubunit enzyme composed of a catalytic core of 3 subunits and several supernumerary subunits. The complex exists as a monomer or a dimer and forms supercomplexes (SCs) in the inner mitochondrial membrane with ubiquinol-cytochrome c oxidoreductase (cytochrome b-c1 complex, complex III, CIII).

It localises to the mitochondrion inner membrane. It catalyses the reaction 4 Fe(II)-[cytochrome c] + O2 + 8 H(+)(in) = 4 Fe(III)-[cytochrome c] + 2 H2O + 4 H(+)(out). Functionally, component of the cytochrome c oxidase, the last enzyme in the mitochondrial electron transport chain which drives oxidative phosphorylation. The respiratory chain contains 3 multisubunit complexes succinate dehydrogenase (complex II, CII), ubiquinol-cytochrome c oxidoreductase (cytochrome b-c1 complex, complex III, CIII) and cytochrome c oxidase (complex IV, CIV), that cooperate to transfer electrons derived from NADH and succinate to molecular oxygen, creating an electrochemical gradient over the inner membrane that drives transmembrane transport and the ATP synthase. Cytochrome c oxidase is the component of the respiratory chain that catalyzes the reduction of oxygen to water. Electrons originating from reduced cytochrome c in the intermembrane space (IMS) are transferred via the dinuclear copper A center (CU(A)) of subunit 2 and heme A of subunit 1 to the active site in subunit 1, a binuclear center (BNC) formed by heme A3 and copper B (CU(B)). The BNC reduces molecular oxygen to 2 water molecules using 4 electrons from cytochrome c in the IMS and 4 protons from the mitochondrial matrix. The polypeptide is Cytochrome c oxidase subunit 3 (COX3) (Candida parapsilosis (Yeast)).